We begin with the raw amino-acid sequence, 172 residues long: 3-hydroxydecanoyl-[acyl-carrier-protein] dehydratase (172 aa).

His-71 is a catalytic residue.

It belongs to the thioester dehydratase family. FabA subfamily. Homodimer.

It localises to the cytoplasm. The enzyme catalyses a (3R)-hydroxyacyl-[ACP] = a (2E)-enoyl-[ACP] + H2O. The catalysed reaction is (3R)-hydroxydecanoyl-[ACP] = (2E)-decenoyl-[ACP] + H2O. It catalyses the reaction (2E)-decenoyl-[ACP] = (3Z)-decenoyl-[ACP]. The protein operates within lipid metabolism; fatty acid biosynthesis. Its function is as follows. Necessary for the introduction of cis unsaturation into fatty acids. Catalyzes the dehydration of (3R)-3-hydroxydecanoyl-ACP to E-(2)-decenoyl-ACP and then its isomerization to Z-(3)-decenoyl-ACP. Can catalyze the dehydratase reaction for beta-hydroxyacyl-ACPs with saturated chain lengths up to 16:0, being most active on intermediate chain length. The chain is 3-hydroxydecanoyl-[acyl-carrier-protein] dehydratase from Proteus mirabilis (strain HI4320).